Consider the following 310-residue polypeptide: Ribose-phosphate pyrophosphokinase (310 aa).

ATP is bound by residues 34–36 and 93–94; these read DGE and RQ. Mg(2+)-binding residues include His127 and Asp167. The active site involves Lys190. D-ribose 5-phosphate contacts are provided by residues Arg192, Asp216, and 220–224; that span reads DSGGT.

Belongs to the ribose-phosphate pyrophosphokinase family. Class I subfamily. As to quaternary structure, homohexamer. The cofactor is Mg(2+).

Its subcellular location is the cytoplasm. It carries out the reaction D-ribose 5-phosphate + ATP = 5-phospho-alpha-D-ribose 1-diphosphate + AMP + H(+). Its pathway is metabolic intermediate biosynthesis; 5-phospho-alpha-D-ribose 1-diphosphate biosynthesis; 5-phospho-alpha-D-ribose 1-diphosphate from D-ribose 5-phosphate (route I): step 1/1. Its function is as follows. Involved in the biosynthesis of the central metabolite phospho-alpha-D-ribosyl-1-pyrophosphate (PRPP) via the transfer of pyrophosphoryl group from ATP to 1-hydroxyl of ribose-5-phosphate (Rib-5-P). This Maricaulis maris (strain MCS10) (Caulobacter maris) protein is Ribose-phosphate pyrophosphokinase.